The sequence spans 76 residues: MENKLSFEEAISQLEHLVSKLEQGDVPLEEAISYFKEGMELSKLCDEKLKDVQEQMAVILGEDGQLEPFTALGDEA.

This sequence belongs to the XseB family. Heterooligomer composed of large and small subunits.

Its subcellular location is the cytoplasm. It carries out the reaction Exonucleolytic cleavage in either 5'- to 3'- or 3'- to 5'-direction to yield nucleoside 5'-phosphates.. In terms of biological role, bidirectionally degrades single-stranded DNA into large acid-insoluble oligonucleotides, which are then degraded further into small acid-soluble oligonucleotides. The protein is Exodeoxyribonuclease 7 small subunit of Bacillus cytotoxicus (strain DSM 22905 / CIP 110041 / 391-98 / NVH 391-98).